The following is a 411-amino-acid chain: Dipeptidase 1 (411 aa).

The N-terminal stretch at 1 to 16 is a signal peptide; the sequence is MWSGWWLWPLVAVCTA. His-36 and Asp-38 together coordinate Zn(2+). Asn-57 carries N-linked (GlcNAc...) asparagine glycosylation. The cysteines at positions 87 and 170 are disulfide-linked. Zn(2+) is bound at residue Glu-141. His-168 provides a ligand contact to substrate. Positions 214 and 235 each coordinate Zn(2+). A disulfide bridge links Cys-242 with Cys-274. Arg-246 provides a ligand contact to substrate. A glycan (N-linked (GlcNAc...) asparagine) is linked at Asn-279. Asp-304 is a substrate binding site. N-linked (GlcNAc...) asparagine glycans are attached at residues Asn-332 and Asn-358. Ser-385 carries GPI-anchor amidated serine lipidation. Positions 386–411 are cleaved as a propeptide — removed in mature form; that stretch reads GASSLHRHWGLLLASLAPLVLCLSLL.

This sequence belongs to the metallo-dependent hydrolases superfamily. Peptidase M19 family. As to quaternary structure, homodimer; disulfide-linked. The cofactor is Zn(2+). Expressed in lung and kidneys.

It is found in the apical cell membrane. The protein resides in the cell projection. The protein localises to the microvillus membrane. It catalyses the reaction an L-aminoacyl-L-amino acid + H2O = 2 an L-alpha-amino acid. The enzyme catalyses leukotriene D4 + H2O = leukotriene E4 + glycine. The catalysed reaction is a beta-lactam + H2O = a substituted beta-amino acid. It carries out the reaction L-cystine-bis-glycine + 2 H2O = L-cystine + 2 glycine. It catalyses the reaction glycyldehydrophenylalanine + H2O = 2,3-didehydrophenylalanine + glycine. Its activity is regulated as follows. Inhibited by L-penicillamine. Beta-lactamase activity is inhibited by cilastatin. In terms of biological role, hydrolyzes a wide range of dipeptides including the conversion of leukotriene D4 to leukotriene E4. Hydrolyzes cystinyl-bis-glycine (cys-bis-gly) formed during glutathione degradation. Also possesses beta lactamase activity and can hydrolyze the beta-lactam antibiotic imipenem. Independently of its dipeptidase activity, acts as an adhesion receptor for neutrophil recruitment from bloodstream into inflamed lungs and liver. The protein is Dipeptidase 1 (DPEP1) of Homo sapiens (Human).